The following is a 380-amino-acid chain: Lipid-A-disaccharide synthase (380 aa).

Belongs to the LpxB family.

The catalysed reaction is a lipid X + a UDP-2-N,3-O-bis[(3R)-3-hydroxyacyl]-alpha-D-glucosamine = a lipid A disaccharide + UDP + H(+). Its pathway is bacterial outer membrane biogenesis; LPS lipid A biosynthesis. Condensation of UDP-2,3-diacylglucosamine and 2,3-diacylglucosamine-1-phosphate to form lipid A disaccharide, a precursor of lipid A, a phosphorylated glycolipid that anchors the lipopolysaccharide to the outer membrane of the cell. This Francisella tularensis subsp. novicida (strain U112) protein is Lipid-A-disaccharide synthase.